The following is a 499-amino-acid chain: Glycerol kinase (499 aa).

Thr-13 lines the ADP pocket. Residues Thr-13, Thr-14, and Ser-15 each contribute to the ATP site. Thr-13 contacts sn-glycerol 3-phosphate. Arg-17 lines the ADP pocket. Sn-glycerol 3-phosphate is bound by residues Arg-83, Glu-84, Tyr-135, and Asp-245. Residues Arg-83, Glu-84, Tyr-135, Asp-245, and Gln-246 each contribute to the glycerol site. ADP-binding residues include Thr-267 and Gly-310. 4 residues coordinate ATP: Thr-267, Gly-310, Gln-314, and Gly-411. ADP is bound by residues Gly-411 and Asn-415.

The protein belongs to the FGGY kinase family. Homotetramer and homodimer (in equilibrium).

It catalyses the reaction glycerol + ATP = sn-glycerol 3-phosphate + ADP + H(+). The protein operates within polyol metabolism; glycerol degradation via glycerol kinase pathway; sn-glycerol 3-phosphate from glycerol: step 1/1. Activated by phosphorylation and inhibited by fructose 1,6-bisphosphate (FBP). Key enzyme in the regulation of glycerol uptake and metabolism. Catalyzes the phosphorylation of glycerol to yield sn-glycerol 3-phosphate. This is Glycerol kinase from Halothermothrix orenii (strain H 168 / OCM 544 / DSM 9562).